The sequence spans 86 residues: Large ribosomal subunit protein bL28 (86 aa).

It belongs to the bacterial ribosomal protein bL28 family.

This chain is Large ribosomal subunit protein bL28, found in Phocaeicola vulgatus (strain ATCC 8482 / DSM 1447 / JCM 5826 / CCUG 4940 / NBRC 14291 / NCTC 11154) (Bacteroides vulgatus).